We begin with the raw amino-acid sequence, 500 residues long: Melanopsin-like (500 aa).

Over 1 to 65 the chain is Extracellular; the sequence is MSHHSSWRGH…TVDVPDHAHY (65 aa). Asparagine 18 is a glycosylation site (N-linked (GlcNAc...) asparagine). Residues 66–86 traverse the membrane as a helical segment; the sequence is IIGSVILIVGITGVIGNALVV. Topologically, residues 87-101 are cytoplasmic; the sequence is YVFCRSRTLRTAGNM. The helical transmembrane segment at 102–122 threads the bilayer; that stretch reads FIVNLAVADFLMSVTQSPVFF. Residues 123–138 are Extracellular-facing; the sequence is AASLHRRWVFGERPCE. Cysteine 137 and cysteine 215 form a disulfide bridge. A helical membrane pass occupies residues 139 to 159; the sequence is LYAFCGALFGICSMMTLTAIA. The Cytoplasmic segment spans residues 160-182; it reads ADRCLAITQPLALVSRVSRRKAG. The helical transmembrane segment at 183 to 203 threads the bilayer; the sequence is AVLVVVWLYSLGWSLPPFFGW. At 204–232 the chain is on the extracellular side; the sequence is SAYVPEGLQTSCSWDYMTFTPSVRAYTIL. A helical transmembrane segment spans residues 233–253; it reads LFVFVFFIPLGIIGSCYFAIF. The Cytoplasmic portion of the chain corresponds to 254-286; that stretch reads QTIRAAGKEIRELDCGETHKVYERMQNEWKMAK. A helical transmembrane segment spans residues 287-307; sequence VALVVIVLFIISWSPYSVVAL. At 308–322 the chain is on the extracellular side; it reads TATAGYSHFLTPYMN. A helical membrane pass occupies residues 323 to 343; sequence SVPAVIAKASAIHNPIIYAIT. Lysine 330 carries the post-translational modification N6-(retinylidene)lysine. Residues 344 to 500 are Cytoplasmic-facing; it reads HPKYRVAIAR…SDGKALLGGN (157 aa). The disordered stretch occupies residues 404-428; it reads RWGKTRLSSASDSDSCWTESEADGS. A compositionally biased stretch (polar residues) spans 409–428; sequence RLSSASDSDSCWTESEADGS.

The protein belongs to the G-protein coupled receptor 1 family. Opsin subfamily. As to expression, expressed in a subset of retinal horizontal cells.

The protein resides in the cell membrane. Its function is as follows. Photoreceptor implicated in non-image-forming responses to light. This chain is Melanopsin-like (opn4l), found in Danio rerio (Zebrafish).